The sequence spans 291 residues: Quinol oxidase subunit 2 (291 aa).

A signal peptide spans 1 to 28 (MQLKKAFWKLASLLPLSLLLFLGGCDKK). 2 helical membrane-spanning segments follow: residues 49–69 (SFLL…VILI) and 91–111 (LEII…IPTV).

It belongs to the cytochrome c oxidase subunit 2 family.

It localises to the cell membrane. It catalyses the reaction 2 a quinol + O2 = 2 a quinone + 2 H2O. Functionally, catalyzes quinol oxidation with the concomitant reduction of oxygen to water. Subunit II transfers the electrons from a quinol to the binuclear center of the catalytic subunit I. This is Quinol oxidase subunit 2 from Bacillus anthracis.